The following is a 203-amino-acid chain: N-(5'-phosphoribosyl)anthranilate isomerase (203 aa).

It belongs to the TrpF family.

The catalysed reaction is N-(5-phospho-beta-D-ribosyl)anthranilate = 1-(2-carboxyphenylamino)-1-deoxy-D-ribulose 5-phosphate. It functions in the pathway amino-acid biosynthesis; L-tryptophan biosynthesis; L-tryptophan from chorismate: step 3/5. The protein is N-(5'-phosphoribosyl)anthranilate isomerase of Sulfurihydrogenibium sp. (strain YO3AOP1).